A 791-amino-acid polypeptide reads, in one-letter code: Ribosome biogenesis protein ERB1 (791 aa).

The segment covering 1 to 12 (MARKNSSLNGSE) has biased composition (polar residues). Disordered stretches follow at residues 1–60 (MARK…DDSD) and 68–87 (AEEENGQEEEYNTSDFSEEG). Composition is skewed to acidic residues over residues 25 to 60 (ESELSDSEDERIEVDGLIDEEASENEAEEAEDDDSD) and 69 to 87 (EEENGQEEEYNTSDFSEEG). The interval 254–372 (RFVPSKHEAK…LRKVPGYSES (119 aa)) is required for interaction with NOP7. Residues 372–408 (SVRERFERSLDLYLAPRVRKNKLNIDPESLIPELPST) form a required for interaction with YTM1 region. WD repeat units lie at residues 424–463 (GHKGKIRTMSIDPTGLWLATGSDDGTVRVWEILTGREVYQ), 472–512 (NNDD…FEIE), 576–618 (TCRK…TQSP), 621–659 (KSKGIIMDAKFHPFKPQLLVCSQRYVRIYDLSQQVLIKK), 662–701 (PGARWLSTIDIHPRGDNLIASSFDKRVLWHDLDLASTPYK), 705–744 (YHEKAVRSVSFHKKLPLFCSAADDGNIHVFHATVYDDLMK), and 760–791 (VNSLGVLDTIWHPREAWLFSAGADKTARLWTT).

The protein belongs to the WD repeat BOP1/ERB1 family. Component of the NOP7 complex, composed of ERB1, NOP7 and YTM1. The complex is held together by ERB1, which interacts with NOP7 via its N-terminal domain and with YTM1 via a high-affinity interaction between the seven-bladed beta-propeller domains of the 2 proteins. The NOP7 complex associates with the 66S pre-ribosome.

The protein resides in the nucleus. It is found in the nucleolus. The protein localises to the nucleoplasm. Its function is as follows. Component of the NOP7 complex, which is required for maturation of the 25S and 5.8S ribosomal RNAs and formation of the 60S ribosome. The sequence is that of Ribosome biogenesis protein ERB1 from Kluyveromyces lactis (strain ATCC 8585 / CBS 2359 / DSM 70799 / NBRC 1267 / NRRL Y-1140 / WM37) (Yeast).